A 410-amino-acid polypeptide reads, in one-letter code: Cytochrome P450 105A3 (410 aa).

Cysteine 359 lines the heme pocket.

This sequence belongs to the cytochrome P450 family. Monomer. Heme serves as cofactor.

Functionally, catalyzes the hydroxylation of sodium ML-236B carboxylate to pravastatin. This chain is Cytochrome P450 105A3 (cyp105A3), found in Streptomyces carbophilus.